The following is a 314-amino-acid chain: Ribosomal RNA small subunit methyltransferase H (314 aa).

S-adenosyl-L-methionine is bound by residues 35-37, aspartate 55, phenylalanine 79, aspartate 101, and glutamine 108; that span reads GGH.

It belongs to the methyltransferase superfamily. RsmH family.

It is found in the cytoplasm. The catalysed reaction is cytidine(1402) in 16S rRNA + S-adenosyl-L-methionine = N(4)-methylcytidine(1402) in 16S rRNA + S-adenosyl-L-homocysteine + H(+). Its function is as follows. Specifically methylates the N4 position of cytidine in position 1402 (C1402) of 16S rRNA. The sequence is that of Ribosomal RNA small subunit methyltransferase H from Pectobacterium carotovorum subsp. carotovorum (strain PC1).